Reading from the N-terminus, the 131-residue chain is uncharacterized protein (131 aa).

A disordered region spans residues 112–131 (LTDNPGAVRKSQKSLIPPYN).

This is an uncharacterized protein from Fowl adenovirus A serotype 1 (strain CELO / Phelps) (FAdV-1).